The primary structure comprises 382 residues: ATP phosphoribosyltransferase regulatory subunit (382 aa).

Belongs to the class-II aminoacyl-tRNA synthetase family. HisZ subfamily. In terms of assembly, heteromultimer composed of HisG and HisZ subunits.

The protein resides in the cytoplasm. It participates in amino-acid biosynthesis; L-histidine biosynthesis; L-histidine from 5-phospho-alpha-D-ribose 1-diphosphate: step 1/9. In terms of biological role, required for the first step of histidine biosynthesis. May allow the feedback regulation of ATP phosphoribosyltransferase activity by histidine. This is ATP phosphoribosyltransferase regulatory subunit from Burkholderia vietnamiensis (strain G4 / LMG 22486) (Burkholderia cepacia (strain R1808)).